Reading from the N-terminus, the 196-residue chain is Bcl-2-like protein 11 (196 aa).

The tract at residues 1-68 (MAKQPSDVNS…PLAPPASPGP (68 aa)) is disordered. Over residues 34–43 (TSLQTESQGN) the composition is skewed to polar residues. S65 is subject to Phosphoserine; by MAPK. S73, S83, and S90 each carry phosphoserine. The interval 90-114 (SGYFSFDTDRSPAPMSCDKSTQTPS) is disordered. A BH3 motif is present at residues 146-160 (IAQELRRIGDEFNET).

The protein belongs to the Bcl-2 family. As to quaternary structure, forms heterodimers with a number of antiapoptotic Bcl-2 proteins, including MCL1, BCL2, BCL2L1 isoform Bcl-X(L), BCL2A1/BFL-1, and BCL2L2/BCLW. Does not heterodimerize with proapoptotic proteins such as BAD, BOK or BAK. Identified in a complex containing BCL2L11, DYNLL1 and BCL2L1 isoform Bcl-X(L); BH3 integrity is required for BCL2L1-binding. Interacts with YWHAZ. When phosphorylated, interacts with TRIM2; this interaction is associated with ubiquitination and degradation. Interacts (via BH3) with MCL1; this interaction may sequester BCL2L11 and prevent its pro-apoptotic activity. When phosphorylated, isoform BimEL interacts with USP27X; this interaction leads to BCL2L11 deubiquitination and stabilization. Interacts with GIMAP5. Interacts with BCL2L10/BCL-B. Post-translationally, phosphorylation at Ser-65 by MAPK1/MAPK3 leads interaction with TRIM2 and ubiquitination, followed by proteasomal degradation. Deubiquitination catalyzed by USP27X stabilizes the protein. In terms of processing, ubiquitination by TRIM2 following phosphorylation by MAPK1/MAPK3 leads to proteasomal degradation. Conversely, deubiquitination catalyzed by USP27X stabilizes the protein. Widely expressed.

Its subcellular location is the membrane. The protein resides in the mitochondrion. Induces apoptosis and anoikis. This is Bcl-2-like protein 11 (Bcl2l11) from Rattus norvegicus (Rat).